The following is a 32-amino-acid chain: MSDIN-like toxin proprotein 2 (32 aa).

Residues 1-10 (MSDINATRVP) constitute a propeptide that is removed on maturation. Positions 11–17 (AWLAECP) form a cross-link, cyclopeptide (Ala-Pro). Positions 18–32 (CVGDDISHLLTRGEK) are excised as a propeptide.

It belongs to the MSDIN fungal toxin family. Post-translationally, processed by the macrocyclase-peptidase enzyme POPB to yield a toxic cyclic heptapeptide. POPB first removes 10 residues from the N-terminus. Conformational trapping of the remaining peptide forces the enzyme to release this intermediate rather than proceed to macrocyclization. The enzyme rebinds the remaining peptide in a different conformation and catalyzes macrocyclization of the N-terminal 7 residues.

Probable toxin that belongs to the MSDIN-like toxin family responsible for a large number of food poisoning cases and deaths. This chain is MSDIN-like toxin proprotein 2, found in Amanita rimosa.